A 207-amino-acid chain; its full sequence is Protein GrpE (207 aa).

Residues 1–11 show a composition bias toward basic and acidic residues; sequence MTETDGQKDNN. A disordered region spans residues 1 to 39; sequence MTETDGQKDNNQDTAQAAADPVVSKPYIMPDDPEEGSNE.

Belongs to the GrpE family. As to quaternary structure, homodimer.

The protein resides in the cytoplasm. In terms of biological role, participates actively in the response to hyperosmotic and heat shock by preventing the aggregation of stress-denatured proteins, in association with DnaK and GrpE. It is the nucleotide exchange factor for DnaK and may function as a thermosensor. Unfolded proteins bind initially to DnaJ; upon interaction with the DnaJ-bound protein, DnaK hydrolyzes its bound ATP, resulting in the formation of a stable complex. GrpE releases ADP from DnaK; ATP binding to DnaK triggers the release of the substrate protein, thus completing the reaction cycle. Several rounds of ATP-dependent interactions between DnaJ, DnaK and GrpE are required for fully efficient folding. In Rhodopseudomonas palustris (strain TIE-1), this protein is Protein GrpE.